A 165-amino-acid chain; its full sequence is MERLAIYPGTFDPFTNGHLDVLERALTIFDKVYIVLAENSKKSSLFTVDERCSMIREITASTSGVSVEVLHGGLLAEYAHSVGATAIVRGLRQVKDFEYEFQLSLLNRHLNPEVTTVFLMPNVKYTYVASSIIREVALLGGDVSKFVHPCVLAMLKKKYEEQNAQ.

Thr-10 lines the substrate pocket. Residues 10–11 (TF) and His-18 contribute to the ATP site. Substrate is bound by residues Lys-42, Leu-75, and Arg-89. ATP is bound by residues 90 to 92 (GLR), Glu-100, and 125 to 131 (YTYVASS).

Belongs to the bacterial CoaD family. In terms of assembly, homohexamer. It depends on Mg(2+) as a cofactor.

The protein localises to the cytoplasm. It catalyses the reaction (R)-4'-phosphopantetheine + ATP + H(+) = 3'-dephospho-CoA + diphosphate. Its pathway is cofactor biosynthesis; coenzyme A biosynthesis; CoA from (R)-pantothenate: step 4/5. In terms of biological role, reversibly transfers an adenylyl group from ATP to 4'-phosphopantetheine, yielding dephospho-CoA (dPCoA) and pyrophosphate. The protein is Phosphopantetheine adenylyltransferase of Chlorobium phaeobacteroides (strain BS1).